The following is a 444-amino-acid chain: IMP-specific 5'-nucleotidase 1 (444 aa).

ATP contacts are provided by Lys132 and His150. The active-site Nucleophile is the Asp170. IMP contacts are provided by Asp170, Asp172, Asp178, Thr204, Ser207, Ser308, Asp363, and Lys371. Residues Asp170 and Asp172 each coordinate Mg(2+). The active-site Proton donor is Asp172. Asp394 contributes to the Mg(2+) binding site.

Belongs to the ISN1 family. In terms of assembly, homotetramer. The cofactor is Mg(2+).

The protein resides in the cytoplasm. The enzyme catalyses IMP + H2O = inosine + phosphate. Its activity is regulated as follows. At physiological pH, allosterically activated by ATP. ATP binding is a prerequisite to magnesium and substrate binding. ATP binds to 2 of the subunits in the homotetramer inducing a closure of these 2 subunits and the release of the C-terminal loop, thereby activating the enzyme. In this conformation, the enzyme can bind IMP and magnesium which ultimately leads to the release of ATP. At pH 5, ATP does not have an allosteric role and is dispensable for magnesium and substrate binding. Inhibited by phosphocholine and D-myo-inositol-4-phosphate. Functionally, specifically, catalyzes the dephosphorylation of inosine monophosphate (IMP) into inosine. By dephosphorylating IMP, plays a role in the purine salvage pathway. Does not have phosphotransferase activity with IMP as phosphate donor and adenosine as phosphate acceptor. This Plasmodium falciparum (isolate 3D7) protein is IMP-specific 5'-nucleotidase 1.